The primary structure comprises 216 residues: Ribosomal RNA small subunit methyltransferase G (216 aa).

S-adenosyl-L-methionine is bound by residues Gly83, Met88, Val134 to Glu135, and Arg149.

Belongs to the methyltransferase superfamily. RNA methyltransferase RsmG family.

It localises to the cytoplasm. The catalysed reaction is guanosine(527) in 16S rRNA + S-adenosyl-L-methionine = N(7)-methylguanosine(527) in 16S rRNA + S-adenosyl-L-homocysteine. Its function is as follows. Specifically methylates the N7 position of guanine in position 527 of 16S rRNA. The sequence is that of Ribosomal RNA small subunit methyltransferase G from Pseudomonas entomophila (strain L48).